Consider the following 316-residue polypeptide: Methionyl-tRNA formyltransferase (316 aa).

111-114 serves as a coordination point for (6S)-5,6,7,8-tetrahydrofolate; sequence GLLP.

This sequence belongs to the Fmt family.

The enzyme catalyses L-methionyl-tRNA(fMet) + (6R)-10-formyltetrahydrofolate = N-formyl-L-methionyl-tRNA(fMet) + (6S)-5,6,7,8-tetrahydrofolate + H(+). Its function is as follows. Attaches a formyl group to the free amino group of methionyl-tRNA(fMet). The formyl group appears to play a dual role in the initiator identity of N-formylmethionyl-tRNA by promoting its recognition by IF2 and preventing the misappropriation of this tRNA by the elongation apparatus. The chain is Methionyl-tRNA formyltransferase from Chlamydia trachomatis serovar L2b (strain UCH-1/proctitis).